A 215-amino-acid chain; its full sequence is MAKPLTERFYQPKELKVMGRWSVEDVVVNDPSLRPYINLEPRILPHSHGRHAKKPFGKAQVHIVERLINKVMRSGASSHKVGGHFMRREHRSLMGKKMKAYEVVKEAFMIIERRTKQNPIQVFIRAIENSAPREDTTTIAFGGIRYHMAVDVSPLRRLDIALKNIALGASAKCYRNKTSYAQALAEEIIAAANKDPKSFAYSKKEEIERIAQSSR.

Belongs to the universal ribosomal protein uS7 family. In terms of assembly, part of the 30S ribosomal subunit.

Its function is as follows. One of the primary rRNA binding proteins, it binds directly to 16S rRNA where it nucleates assembly of the head domain of the 30S subunit. Is located at the subunit interface close to the decoding center. In Thermococcus onnurineus (strain NA1), this protein is Small ribosomal subunit protein uS7.